The primary structure comprises 193 residues: MKTLIRPLVVIFAVLTVVTGMAYPAVMTAFGQAVFPAQANGSLIERDGRAVGSALIGQPFDAPRYFWGRLSATAPMPYNAAGSGGSNLGPLNPSLAEQVKARIAALRDAGTDLSKPVPVDLVTASASGLDPDITPAAAAYQIERVAKARKLTADAVARLVAANTTGRQFGVLGEPRVNVLKLNLALDAAQGGH.

The helical transmembrane segment at 7–27 threads the bilayer; sequence PLVVIFAVLTVVTGMAYPAVM.

It belongs to the KdpC family. The system is composed of three essential subunits: KdpA, KdpB and KdpC.

The protein resides in the cell inner membrane. Functionally, part of the high-affinity ATP-driven potassium transport (or Kdp) system, which catalyzes the hydrolysis of ATP coupled with the electrogenic transport of potassium into the cytoplasm. This subunit acts as a catalytic chaperone that increases the ATP-binding affinity of the ATP-hydrolyzing subunit KdpB by the formation of a transient KdpB/KdpC/ATP ternary complex. This chain is Potassium-transporting ATPase KdpC subunit, found in Burkholderia vietnamiensis (strain G4 / LMG 22486) (Burkholderia cepacia (strain R1808)).